The primary structure comprises 616 residues: Chaperone protein HscA (616 aa).

This sequence belongs to the heat shock protein 70 family.

In terms of biological role, chaperone involved in the maturation of iron-sulfur cluster-containing proteins. Has a low intrinsic ATPase activity which is markedly stimulated by HscB. Involved in the maturation of IscU. The protein is Chaperone protein HscA of Salmonella newport (strain SL254).